A 147-amino-acid chain; its full sequence is Transcriptional regulator MraZ (147 aa).

SpoVT-AbrB domains lie at 5–51 (GTPV…PQPV) and 80–123 (ACDV…DSEK).

Belongs to the MraZ family. As to quaternary structure, forms oligomers.

The protein localises to the cytoplasm. It localises to the nucleoid. The chain is Transcriptional regulator MraZ from Nitrosospira multiformis (strain ATCC 25196 / NCIMB 11849 / C 71).